The primary structure comprises 365 residues: Serpentine receptor class epsilon-21 (365 aa).

7 consecutive transmembrane segments (helical) span residues 49–69 (ILIN…VFCI), 82–102 (IIIS…FVFI), 116–136 (LLFW…HTLL), 158–178 (VWIA…YAFL), 189–209 (IFIV…IIYF), 250–270 (VVVV…PIIL), and 292–314 (PLVV…LSYY).

It belongs to the nematode receptor-like protein sre family.

Its subcellular location is the membrane. This Caenorhabditis elegans protein is Serpentine receptor class epsilon-21 (sre-21).